The following is a 144-amino-acid chain: Large ribosomal subunit protein uL11 (144 aa).

Belongs to the universal ribosomal protein uL11 family. Part of the ribosomal stalk of the 50S ribosomal subunit. Interacts with L10 and the large rRNA to form the base of the stalk. L10 forms an elongated spine to which L12 dimers bind in a sequential fashion forming a multimeric L10(L12)X complex. Post-translationally, one or more lysine residues are methylated.

In terms of biological role, forms part of the ribosomal stalk which helps the ribosome interact with GTP-bound translation factors. This chain is Large ribosomal subunit protein uL11, found in Legionella pneumophila (strain Paris).